A 219-amino-acid polypeptide reads, in one-letter code: 23.6 kDa heat shock protein, mitochondrial (219 aa).

A mitochondrion-targeting transit peptide spans 1–29 (MALARQCLSKRLAAGCALARPLHAASPVA). The sHSP domain occupies 104-219 (QVAETLTRPL…KRSVTEVKVR (116 aa)).

The protein belongs to the small heat shock protein (HSP20) family. In terms of assembly, may form oligomeric structures.

The protein localises to the mitochondrion. The protein is 23.6 kDa heat shock protein, mitochondrial (HSP23.6) of Oryza sativa subsp. japonica (Rice).